The chain runs to 162 residues: Phosphopantetheine adenylyltransferase (162 aa).

Ser-9 lines the substrate pocket. ATP contacts are provided by residues 9–10 (SF) and His-17. Substrate-binding residues include Lys-41, Thr-73, and Arg-87. ATP contacts are provided by residues 88-90 (GLR), Glu-98, and 122-128 (NQNISSS).

This sequence belongs to the bacterial CoaD family. As to quaternary structure, homohexamer. Mg(2+) is required as a cofactor.

The protein localises to the cytoplasm. The enzyme catalyses (R)-4'-phosphopantetheine + ATP + H(+) = 3'-dephospho-CoA + diphosphate. Its pathway is cofactor biosynthesis; coenzyme A biosynthesis; CoA from (R)-pantothenate: step 4/5. Its function is as follows. Reversibly transfers an adenylyl group from ATP to 4'-phosphopantetheine, yielding dephospho-CoA (dPCoA) and pyrophosphate. The sequence is that of Phosphopantetheine adenylyltransferase from Leuconostoc mesenteroides subsp. mesenteroides (strain ATCC 8293 / DSM 20343 / BCRC 11652 / CCM 1803 / JCM 6124 / NCDO 523 / NBRC 100496 / NCIMB 8023 / NCTC 12954 / NRRL B-1118 / 37Y).